A 202-amino-acid chain; its full sequence is Orotate phosphoribosyltransferase (202 aa).

A 5-phospho-alpha-D-ribose 1-diphosphate-binding site is contributed by 113–121; the sequence is EDIITTGGS. Orotate is bound by residues T117 and R145.

It belongs to the purine/pyrimidine phosphoribosyltransferase family. PyrE subfamily. In terms of assembly, homodimer. It depends on Mg(2+) as a cofactor.

It catalyses the reaction orotidine 5'-phosphate + diphosphate = orotate + 5-phospho-alpha-D-ribose 1-diphosphate. The protein operates within pyrimidine metabolism; UMP biosynthesis via de novo pathway; UMP from orotate: step 1/2. Functionally, catalyzes the transfer of a ribosyl phosphate group from 5-phosphoribose 1-diphosphate to orotate, leading to the formation of orotidine monophosphate (OMP). The sequence is that of Orotate phosphoribosyltransferase from Campylobacter lari (strain RM2100 / D67 / ATCC BAA-1060).